Consider the following 422-residue polypeptide: Succinate--CoA ligase [ADP-forming] subunit beta, mitochondrial (422 aa).

The transit peptide at 1–27 directs the protein to the mitochondrion; that stretch reads MVRGSLGKLASRALSVAGKWQHQQLRR. The 244-residue stretch at 36 to 279 folds into the ATP-grasp domain; sequence AELMGKYGIN…TTQEDPREVA (244 aa). Residues Lys-75, 82–84, and Glu-142 contribute to the ATP site; that span reads GRG. Mg(2+) is bound by residues Asn-234 and Asp-248. Residues Asn-299 and 356–358 contribute to the substrate site; that span reads GIM.

This sequence belongs to the succinate/malate CoA ligase beta subunit family. Heterodimer of an alpha and a beta subunit. It depends on Mg(2+) as a cofactor.

It is found in the mitochondrion. The enzyme catalyses succinate + ATP + CoA = succinyl-CoA + ADP + phosphate. It functions in the pathway carbohydrate metabolism; tricarboxylic acid cycle; succinate from succinyl-CoA (ligase route): step 1/1. Succinyl-CoA synthetase functions in the citric acid cycle (TCA), coupling the hydrolysis of succinyl-CoA to the synthesis of ATP and thus represents the only step of substrate-level phosphorylation in the TCA. The beta subunit provides nucleotide specificity of the enzyme and binds the substrate succinate, while the binding sites for coenzyme A and phosphate are found in the alpha subunit. The sequence is that of Succinate--CoA ligase [ADP-forming] subunit beta, mitochondrial from Oryza sativa subsp. japonica (Rice).